We begin with the raw amino-acid sequence, 105 residues long: uncharacterized protein (105 aa).

Belongs to the M.jannaschii MJ0023/MJ0349/MJ1072/MJ1074/MJ1107/MJECL16 family.

This is an uncharacterized protein from Methanocaldococcus jannaschii (strain ATCC 43067 / DSM 2661 / JAL-1 / JCM 10045 / NBRC 100440) (Methanococcus jannaschii).